Consider the following 64-residue polypeptide: Conotoxin LiC121 (64 aa).

A signal peptide spans 1 to 22; that stretch reads MRCVPVFIILLLLSPSAPSVDA. Residues 23–48 constitute a propeptide that is removed on maturation; sequence HPKTKDDVPLASFHDDAKRTLQRLWI.

Belongs to the conotoxin T superfamily. Contains 2 disulfide bonds that can be either 'C1-C3, C2-C4' or 'C1-C4, C2-C3', since these disulfide connectivities have been observed for conotoxins with cysteine framework V (for examples, see AC P0DQQ7 and AC P81755). As to expression, expressed by the venom duct.

The protein localises to the secreted. The chain is Conotoxin LiC121 from Conus lividus (Livid cone).